A 353-amino-acid chain; its full sequence is Photosystem II protein D1 (353 aa).

Thr2 bears the N-acetylthreonine mark. Residue Thr2 is modified to Phosphothreonine. A run of 3 helical transmembrane segments spans residues 29–46 (YIGW…TATS), 118–133 (HFFL…EWEL), and 142–156 (WIAV…AATA). His118 is a binding site for chlorophyll a. Tyr126 provides a ligand contact to pheophytin a. [CaMn4O5] cluster contacts are provided by Asp170 and Glu189. The helical transmembrane segment at 197 to 218 (FHMLGVAGVFGGSLFSAMHGSL) threads the bilayer. A chlorophyll a-binding site is contributed by His198. A quinone-binding positions include His215 and 264 to 265 (SF). Position 215 (His215) interacts with Fe cation. His272 contributes to the Fe cation binding site. Residues 274-288 (FLAAWPVVGIWFTAL) traverse the membrane as a helical segment. [CaMn4O5] cluster-binding residues include His332, Glu333, Asp342, and Ala344. Residues 345 to 353 (SVEAPSVNA) constitute a propeptide that is removed on maturation.

The protein belongs to the reaction center PufL/M/PsbA/D family. PSII is composed of 1 copy each of membrane proteins PsbA, PsbB, PsbC, PsbD, PsbE, PsbF, PsbH, PsbI, PsbJ, PsbK, PsbL, PsbM, PsbT, PsbX, PsbY, PsbZ, Psb30/Ycf12, at least 3 peripheral proteins of the oxygen-evolving complex and a large number of cofactors. It forms dimeric complexes. It depends on The D1/D2 heterodimer binds P680, chlorophylls that are the primary electron donor of PSII, and subsequent electron acceptors. It shares a non-heme iron and each subunit binds pheophytin, quinone, additional chlorophylls, carotenoids and lipids. D1 provides most of the ligands for the Mn4-Ca-O5 cluster of the oxygen-evolving complex (OEC). There is also a Cl(-1) ion associated with D1 and D2, which is required for oxygen evolution. The PSII complex binds additional chlorophylls, carotenoids and specific lipids. as a cofactor. The 9 C-terminal residues are removed, probably by CTPA (AC O04073); processing is essential to allow assembly of the oxygen-evolving complex and thus photosynthetic growth. In terms of processing, tyr-161 forms a radical intermediate that is referred to as redox-active TyrZ, YZ or Y-Z.

The protein localises to the plastid. The protein resides in the chloroplast thylakoid membrane. The enzyme catalyses 2 a plastoquinone + 4 hnu + 2 H2O = 2 a plastoquinol + O2. Functionally, photosystem II (PSII) is a light-driven water:plastoquinone oxidoreductase that uses light energy to abstract electrons from H(2)O, generating O(2) and a proton gradient subsequently used for ATP formation. It consists of a core antenna complex that captures photons, and an electron transfer chain that converts photonic excitation into a charge separation. The D1/D2 (PsbA/PsbD) reaction center heterodimer binds P680, the primary electron donor of PSII as well as several subsequent electron acceptors. The sequence is that of Photosystem II protein D1 from Tetradesmus obliquus (Green alga).